Consider the following 432-residue polypeptide: Probable rhamnogalacturonase E (432 aa).

The signal sequence occupies residues 1–21; it reads MQSKTFSVLSSCLLLIATVQG. A disulfide bridge links Cys-42 with Cys-68. N-linked (GlcNAc...) asparagine glycans are attached at residues Asn-53, Asn-91, and Asn-106. The Proton donor role is filled by Asp-221. An intrachain disulfide couples Cys-223 to Cys-240. Asn-241 and Asn-256 each carry an N-linked (GlcNAc...) asparagine glycan. His-296 is a catalytic residue. Intrachain disulfides connect Cys-329–Cys-335 and Cys-357–Cys-366.

It belongs to the glycosyl hydrolase 28 family.

It localises to the secreted. Functionally, pectinolytic enzymes consist of four classes of enzymes: pectine lyase, polygalacturonase, pectin methylesterase and rhamnogalacturonase. Hydrolyzes alpha-D-galacturonopyranosyl-(1,2)-alpha-L-rhamnopyranosyl linkages in the backbone of the hairy regions of pectins. This chain is Probable rhamnogalacturonase E (rhgE), found in Aspergillus oryzae (strain ATCC 42149 / RIB 40) (Yellow koji mold).